A 511-amino-acid polypeptide reads, in one-letter code: Ribose import ATP-binding protein RbsA (511 aa).

ABC transporter domains lie at F9 to D245 and L261 to R506. G41–S48 lines the ATP pocket.

Belongs to the ABC transporter superfamily. Ribose importer (TC 3.A.1.2.1) family. The complex is composed of an ATP-binding protein (RbsA), two transmembrane proteins (RbsC) and a solute-binding protein (RbsB).

The protein resides in the cell inner membrane. It carries out the reaction D-ribose(out) + ATP + H2O = D-ribose(in) + ADP + phosphate + H(+). Part of the ABC transporter complex RbsABC involved in ribose import. Responsible for energy coupling to the transport system. The protein is Ribose import ATP-binding protein RbsA of Rhodopirellula baltica (strain DSM 10527 / NCIMB 13988 / SH1).